We begin with the raw amino-acid sequence, 151 residues long: Deoxyuridine 5'-triphosphate nucleotidohydrolase (151 aa).

Residues 70–72 (RSG), N83, 87–89 (LID), and M97 each bind substrate.

This sequence belongs to the dUTPase family. Requires Mg(2+) as cofactor.

It catalyses the reaction dUTP + H2O = dUMP + diphosphate + H(+). Its pathway is pyrimidine metabolism; dUMP biosynthesis; dUMP from dCTP (dUTP route): step 2/2. Functionally, this enzyme is involved in nucleotide metabolism: it produces dUMP, the immediate precursor of thymidine nucleotides and it decreases the intracellular concentration of dUTP so that uracil cannot be incorporated into DNA. The polypeptide is Deoxyuridine 5'-triphosphate nucleotidohydrolase (Pseudomonas syringae pv. syringae (strain B728a)).